The primary structure comprises 84 residues: Neurotoxin BmK-M10 (84 aa).

The N-terminal stretch at 1 to 19 is a signal peptide; that stretch reads MNYLVMISFALLLMKGVES. The region spanning 21–83 is the LCN-type CS-alpha/beta domain; the sequence is RDAYIAKPEN…VPIRVPGKCQ (63 aa). Cystine bridges form between cysteine 31-cysteine 82, cysteine 35-cysteine 55, cysteine 41-cysteine 65, and cysteine 45-cysteine 67. A propeptide (removed by a carboxypeptidase) is located at residue arginine 84.

Expressed by the venom gland.

It localises to the secreted. In terms of biological role, binds to voltage-dependent sodium channels (Nav) and voltage-dependent delayed rectifier potassium channels and inhibits the inactivation of the activated channels, thereby blocking neuronal transmission. Administration to mice at a dosage of 0.8 mg/kg produces an analgesic effect. The protein is Neurotoxin BmK-M10 of Olivierus martensii (Manchurian scorpion).